A 485-amino-acid polypeptide reads, in one-letter code: Aspartyl protease family protein 2 (485 aa).

The N-terminal stretch at 1-23 (MVGRRKALLFSLCFFFLSLPSFS) is a signal peptide. The disordered stretch occupies residues 43–71 (PVSFQPDSDSESLLESEFESGSDSESSSS). The span at 50–64 (SDSESLLESEFESGS) shows a compositional bias: acidic residues. Positions 142 to 480 (YFTRLGVGTP…DLASSRVGFA (339 aa)) constitute a Peptidase A1 domain. Active-site residues include Asp-160 and Asp-365.

It belongs to the peptidase A1 family.

Functionally, aspartyl protease. Not able to cleave BAG6. The polypeptide is Aspartyl protease family protein 2 (Arabidopsis thaliana (Mouse-ear cress)).